The primary structure comprises 123 residues: Ribosome-binding factor A (123 aa).

This sequence belongs to the RbfA family. Monomer. Binds 30S ribosomal subunits, but not 50S ribosomal subunits or 70S ribosomes.

Its subcellular location is the cytoplasm. Its function is as follows. One of several proteins that assist in the late maturation steps of the functional core of the 30S ribosomal subunit. Associates with free 30S ribosomal subunits (but not with 30S subunits that are part of 70S ribosomes or polysomes). Required for efficient processing of 16S rRNA. May interact with the 5'-terminal helix region of 16S rRNA. The polypeptide is Ribosome-binding factor A (Neisseria meningitidis serogroup C (strain 053442)).